Reading from the N-terminus, the 524-residue chain is MSDPVIKRALVSVSDKTGIVDFCRELSELGVEIFSTGGTLKTLQDAGIAAASISTITGFPEIMDGRVKTLHPKIHGGLLAVRENANHVKQAADNGISFIDLVVVNLYPFEATVAKPNVSFEDAIENIDIGGPSMLRSAAKNNESVTVVTDSADYALVLQEMRANNGATTRATRLHLALKVFELTSRYDRAIATYLAGKVSAAEAAASTMSVQLAKELDMRYGENPHQNAGLYRLTDSNGTRSFEEFFEKLHGKELSYNNMLDIAAATSLIEEFRGEEPTVVIIKHTNPCGVAQASSLVDAWHRAFSTDTQAPFGGIVAFNRPLDMAAAQAVNEIFTEILIAPAFEDGVLELLMKKKDRRLVVQKKALPQSGWEFKSTPFGMLVQERDSKIVAKEDLKVVTKRQPTEAEIADLMFAWKICKHIKSNTILYVKNRQTYGVGAGQMSRVDSSKIARWKASEVNLDLHGSVVASDAFFPFADGLLAAAEAGVTAVIQPGGSIRDNEVIEAADANNLAMVFTGMRHFKH.

In terms of domain architecture, MGS-like spans 1–149 (MSDPVIKRAL…KNNESVTVVT (149 aa)).

This sequence belongs to the PurH family.

The enzyme catalyses (6R)-10-formyltetrahydrofolate + 5-amino-1-(5-phospho-beta-D-ribosyl)imidazole-4-carboxamide = 5-formamido-1-(5-phospho-D-ribosyl)imidazole-4-carboxamide + (6S)-5,6,7,8-tetrahydrofolate. The catalysed reaction is IMP + H2O = 5-formamido-1-(5-phospho-D-ribosyl)imidazole-4-carboxamide. The protein operates within purine metabolism; IMP biosynthesis via de novo pathway; 5-formamido-1-(5-phospho-D-ribosyl)imidazole-4-carboxamide from 5-amino-1-(5-phospho-D-ribosyl)imidazole-4-carboxamide (10-formyl THF route): step 1/1. It functions in the pathway purine metabolism; IMP biosynthesis via de novo pathway; IMP from 5-formamido-1-(5-phospho-D-ribosyl)imidazole-4-carboxamide: step 1/1. This is Bifunctional purine biosynthesis protein PurH from Chlorobium chlorochromatii (strain CaD3).